The chain runs to 223 residues: Peptidyl-prolyl cis-trans isomerase FKBP16-3, chloroplastic (223 aa).

The transit peptide at 1-36 (MAASSPSLLLPLGSASRNGLTTKNPNSSRYIAARVI) directs the protein to the chloroplast. A thylakoid-targeting transit peptide spans 37 to 76 (ASETREQSCKISNLSSRREAMLLVLGVSGGLSMSSLAAYA). In terms of domain architecture, PPIase FKBP-type spans 124–216 (GFQVAANYVA…IFDVSLEFIP (93 aa)).

It belongs to the FKBP-type PPIase family.

Its subcellular location is the plastid. The protein resides in the chloroplast thylakoid lumen. The enzyme catalyses [protein]-peptidylproline (omega=180) = [protein]-peptidylproline (omega=0). PPIases accelerate the folding of proteins. It catalyzes the cis-trans isomerization of proline imidic peptide bonds in oligopeptides. This is Peptidyl-prolyl cis-trans isomerase FKBP16-3, chloroplastic (FKBP16-3) from Arabidopsis thaliana (Mouse-ear cress).